The chain runs to 351 residues: L-threonine 3-dehydrogenase (351 aa).

Cys39 is a Zn(2+) binding site. Residues Thr41 and His44 each act as charge relay system in the active site. His64, Glu65, Cys94, Cys97, Cys100, and Cys108 together coordinate Zn(2+). NAD(+) is bound by residues Ile176, Asp196, Arg201, 271 to 273 (LGI), and 295 to 296 (IY).

This sequence belongs to the zinc-containing alcohol dehydrogenase family. Homotetramer. It depends on Zn(2+) as a cofactor.

It is found in the cytoplasm. The enzyme catalyses L-threonine + NAD(+) = (2S)-2-amino-3-oxobutanoate + NADH + H(+). It participates in amino-acid degradation; L-threonine degradation via oxydo-reductase pathway; glycine from L-threonine: step 1/2. Functionally, catalyzes the NAD(+)-dependent oxidation of L-threonine to 2-amino-3-ketobutyrate. This is L-threonine 3-dehydrogenase from Francisella tularensis subsp. novicida (strain U112).